We begin with the raw amino-acid sequence, 72 residues long: ATP synthase subunit c (72 aa).

The next 2 membrane-spanning stretches (helical) occupy residues 1–21 (MSLG…GAGI) and 48–68 (MFIG…FSFI).

The protein belongs to the ATPase C chain family. F-type ATPases have 2 components, F(1) - the catalytic core - and F(0) - the membrane proton channel. F(1) has five subunits: alpha(3), beta(3), gamma(1), delta(1), epsilon(1). F(0) has three main subunits: a(1), b(2) and c(10-14). The alpha and beta chains form an alternating ring which encloses part of the gamma chain. F(1) is attached to F(0) by a central stalk formed by the gamma and epsilon chains, while a peripheral stalk is formed by the delta and b chains.

It is found in the cell membrane. Its function is as follows. F(1)F(0) ATP synthase produces ATP from ADP in the presence of a proton or sodium gradient. F-type ATPases consist of two structural domains, F(1) containing the extramembraneous catalytic core and F(0) containing the membrane proton channel, linked together by a central stalk and a peripheral stalk. During catalysis, ATP synthesis in the catalytic domain of F(1) is coupled via a rotary mechanism of the central stalk subunits to proton translocation. Functionally, key component of the F(0) channel; it plays a direct role in translocation across the membrane. A homomeric c-ring of between 10-14 subunits forms the central stalk rotor element with the F(1) delta and epsilon subunits. This chain is ATP synthase subunit c, found in Geobacillus stearothermophilus (Bacillus stearothermophilus).